Consider the following 438-residue polypeptide: Aspartate--tRNA(Asp) ligase (438 aa).

L-aspartate is bound at residue E170. Residues 192–195 (QLYK) are aspartate. R214 contacts L-aspartate. ATP-binding positions include 214-216 (RAE), 222-224 (RHL), and E361. Mg(2+) is bound by residues E361 and S364. Residues S364 and R368 each contribute to the L-aspartate site. Position 409–412 (409–412 (GAER)) interacts with ATP.

The protein belongs to the class-II aminoacyl-tRNA synthetase family. Type 2 subfamily. In terms of assembly, homodimer. Mg(2+) is required as a cofactor.

The protein resides in the cytoplasm. It carries out the reaction tRNA(Asp) + L-aspartate + ATP = L-aspartyl-tRNA(Asp) + AMP + diphosphate. In terms of biological role, catalyzes the attachment of L-aspartate to tRNA(Asp) in a two-step reaction: L-aspartate is first activated by ATP to form Asp-AMP and then transferred to the acceptor end of tRNA(Asp). In Pyrococcus abyssi (strain GE5 / Orsay), this protein is Aspartate--tRNA(Asp) ligase.